A 149-amino-acid chain; its full sequence is Nucleoside diphosphate kinase (149 aa).

Residues lysine 9, phenylalanine 57, arginine 85, threonine 91, arginine 102, and asparagine 112 each contribute to the ATP site. Catalysis depends on histidine 115, which acts as the Pros-phosphohistidine intermediate.

Belongs to the NDK family. As to quaternary structure, homotetramer. The cofactor is Mg(2+).

It localises to the cytoplasm. It catalyses the reaction dZDP + ATP = dZTP + ADP. It carries out the reaction a 2'-deoxyribonucleoside 5'-diphosphate + ATP = a 2'-deoxyribonucleoside 5'-triphosphate + ADP. The catalysed reaction is a ribonucleoside 5'-diphosphate + ATP = a ribonucleoside 5'-triphosphate + ADP. The protein operates within purine metabolism. In terms of biological role, major role in the synthesis of nucleoside triphosphates other than ATP. The ATP gamma phosphate is transferred to the NDP beta phosphate via a ping-pong mechanism, using a phosphorylated active-site intermediate. (Microbial infection) Catalyzes the phosphorylation of dZDP to dZTP, when the bacterium is infected by a phage that produces the substrate for the synthesis of dZTP (2- amino-2'-deoxyadenosine 5'-triphosphate), which is then used by the phage as a DNA polymerase substrate. The sequence is that of Nucleoside diphosphate kinase from Synechococcus elongatus (strain ATCC 33912 / PCC 7942 / FACHB-805) (Anacystis nidulans R2).